Reading from the N-terminus, the 89-residue chain is Large ribosomal subunit protein bL27 (89 aa).

The segment at 1-20 (MAHKKAGGSSRNGRDSAGRR) is disordered.

The protein belongs to the bacterial ribosomal protein bL27 family.

This is Large ribosomal subunit protein bL27 from Rhizorhabdus wittichii (strain DSM 6014 / CCUG 31198 / JCM 15750 / NBRC 105917 / EY 4224 / RW1) (Sphingomonas wittichii).